Consider the following 186-residue polypeptide: Peptidyl-tRNA hydrolase (186 aa).

TRNA is bound at residue Y14. The Proton acceptor role is filled by H19. TRNA is bound by residues F64, N66, and N112.

This sequence belongs to the PTH family. In terms of assembly, monomer.

It is found in the cytoplasm. It carries out the reaction an N-acyl-L-alpha-aminoacyl-tRNA + H2O = an N-acyl-L-amino acid + a tRNA + H(+). Hydrolyzes ribosome-free peptidyl-tRNAs (with 1 or more amino acids incorporated), which drop off the ribosome during protein synthesis, or as a result of ribosome stalling. In terms of biological role, catalyzes the release of premature peptidyl moieties from peptidyl-tRNA molecules trapped in stalled 50S ribosomal subunits, and thus maintains levels of free tRNAs and 50S ribosomes. In Mycoplasma capricolum subsp. capricolum (strain California kid / ATCC 27343 / NCTC 10154), this protein is Peptidyl-tRNA hydrolase.